The chain runs to 101 residues: NADH-quinone oxidoreductase subunit K (101 aa).

The next 3 helical transmembrane spans lie at 4–24 (LGYF…GIII), 30–50 (IVLL…FIAF), and 61–81 (IFVF…LAIL).

Belongs to the complex I subunit 4L family. In terms of assembly, NDH-1 is composed of 14 different subunits. Subunits NuoA, H, J, K, L, M, N constitute the membrane sector of the complex.

Its subcellular location is the cell inner membrane. The enzyme catalyses a quinone + NADH + 5 H(+)(in) = a quinol + NAD(+) + 4 H(+)(out). NDH-1 shuttles electrons from NADH, via FMN and iron-sulfur (Fe-S) centers, to quinones in the respiratory chain. The immediate electron acceptor for the enzyme in this species is believed to be ubiquinone. Couples the redox reaction to proton translocation (for every two electrons transferred, four hydrogen ions are translocated across the cytoplasmic membrane), and thus conserves the redox energy in a proton gradient. This Coxiella burnetii (strain CbuG_Q212) (Coxiella burnetii (strain Q212)) protein is NADH-quinone oxidoreductase subunit K.